The primary structure comprises 451 residues: Tubulin alpha-1 chain (451 aa).

Gln-11 provides a ligand contact to GTP. Lys-40 carries the post-translational modification N6-acetyllysine. Positions 71, 144, 145, 179, 206, and 228 each coordinate GTP. A Mg(2+)-binding site is contributed by Glu-71. Residue Glu-254 is part of the active site. The tract at residues 432 to 451 (YEEVGADSAEGDEEDEGDEY) is disordered.

This sequence belongs to the tubulin family. As to quaternary structure, dimer of alpha and beta chains. A typical microtubule is a hollow water-filled tube with an outer diameter of 25 nm and an inner diameter of 15 nM. Alpha-beta heterodimers associate head-to-tail to form protofilaments running lengthwise along the microtubule wall with the beta-tubulin subunit facing the microtubule plus end conferring a structural polarity. Microtubules usually have 13 protofilaments but different protofilament numbers can be found in some organisms and specialized cells. Mg(2+) serves as cofactor. In terms of processing, undergoes a tyrosination/detyrosination cycle, the cyclic removal and re-addition of a C-terminal tyrosine residue by the enzymes tubulin tyrosine carboxypeptidase (TTCP) and tubulin tyrosine ligase (TTL), respectively. Post-translationally, acetylation of alpha chains at Lys-40 stabilizes microtubules and affects affinity and processivity of microtubule motors. This modification has a role in multiple cellular functions, ranging from cell motility, cell cycle progression or cell differentiation to intracellular trafficking and signaling.

Its subcellular location is the cytoplasm. The protein resides in the cytoskeleton. The catalysed reaction is GTP + H2O = GDP + phosphate + H(+). Tubulin is the major constituent of microtubules, a cylinder consisting of laterally associated linear protofilaments composed of alpha- and beta-tubulin heterodimers. Microtubules grow by the addition of GTP-tubulin dimers to the microtubule end, where a stabilizing cap forms. Below the cap, tubulin dimers are in GDP-bound state, owing to GTPase activity of alpha-tubulin. This is Tubulin alpha-1 chain from Gossypium hirsutum (Upland cotton).